Consider the following 486-residue polypeptide: Argininosuccinate lyase (486 aa).

The protein belongs to the lyase 1 family. Argininosuccinate lyase subfamily.

It localises to the cytoplasm. It catalyses the reaction 2-(N(omega)-L-arginino)succinate = fumarate + L-arginine. It functions in the pathway amino-acid biosynthesis; L-arginine biosynthesis; L-arginine from L-ornithine and carbamoyl phosphate: step 3/3. The protein is Argininosuccinate lyase of Acidovorax ebreus (strain TPSY) (Diaphorobacter sp. (strain TPSY)).